The following is a 576-amino-acid chain: MAGUK p55 subfamily member 7 (576 aa).

L27 domains follow at residues 10-63 (SDTG…YEKE) and 65-122 (PMPV…YDPV). A PDZ domain is found at 139-220 (IIRLVKNREP…AITFKIIPSI (82 aa)). In terms of domain architecture, SH3 spans 228-298 (DGKMFVKALF…PSKQFQERRF (71 aa)). The Guanylate kinase-like domain maps to 368–560 (YRLVILVGPV…AYNELRSTLE (193 aa)).

Belongs to the MAGUK family.

Its subcellular location is the membrane. It localises to the cell junction. The protein localises to the tight junction. The protein resides in the adherens junction. In terms of biological role, acts as an important adapter that promotes epithelial cell polarity and tight junction formation. Involved in the assembly of protein complexes at sites of cell-cell contact. The sequence is that of MAGUK p55 subfamily member 7 (mpp7) from Xenopus tropicalis (Western clawed frog).